A 219-amino-acid polypeptide reads, in one-letter code: Ribose-5-phosphate isomerase A (219 aa).

Substrate-binding positions include 28 to 31, 81 to 84, and 94 to 97; these read TGST, DGAD, and KGGG. E103 (proton acceptor) is an active-site residue. Substrate is bound at residue K121.

The protein belongs to the ribose 5-phosphate isomerase family. As to quaternary structure, homodimer.

It catalyses the reaction aldehydo-D-ribose 5-phosphate = D-ribulose 5-phosphate. Its pathway is carbohydrate degradation; pentose phosphate pathway; D-ribose 5-phosphate from D-ribulose 5-phosphate (non-oxidative stage): step 1/1. In terms of biological role, catalyzes the reversible conversion of ribose-5-phosphate to ribulose 5-phosphate. The polypeptide is Ribose-5-phosphate isomerase A (Photobacterium profundum (strain SS9)).